The primary structure comprises 180 residues: Pro-glucagon (180 aa).

The signal sequence occupies residues 1-20; it reads MKSIYFVAGLFVMLVQGSWQ. The tract at residues 23 to 56 is disordered; it reads LQDTEEKPRSFSTSQTDLLDDPDQMNEDKRHSQG. Serine 54 carries the phosphoserine modification. Residues 84–89 constitute a propeptide that is removed on maturation; the sequence is NRNEIA. Serine 105 and serine 108 each carry phosphoserine. Arginine 127 carries the arginine amide modification. Residues 131-145 constitute a propeptide that is removed on maturation; the sequence is DFPEEVTIVEELRRR. 2 positions are modified to phosphoserine: serine 150 and serine 152.

It belongs to the glucagon family. In terms of processing, proglucagon is post-translationally processed in a tissue-specific manner in pancreatic A cells and intestinal L cells. In pancreatic A cells, the major bioactive hormone is glucagon cleaved by PCSK2/PC2. In the intestinal L cells PCSK1/PC1 liberates GLP-1, GLP-2, glicentin and oxyntomodulin. GLP-1 is further N-terminally truncated by post-translational processing in the intestinal L cells resulting in GLP-1(7-37) GLP-1-(7-36)amide. The C-terminal amidation is neither important for the metabolism of GLP-1 nor for its effects on the endocrine pancreas. In terms of tissue distribution, glucagon is secreted in the A cells of the islets of Langerhans. GLP-1, GLP-2, oxyntomodulin and glicentin are secreted from enteroendocrine cells throughout the gastrointestinal tract. GLP-1 and GLP-2 are also secreted in selected neurons in the brain.

It localises to the secreted. Plays a key role in glucose metabolism and homeostasis. Regulates blood glucose by increasing gluconeogenesis and decreasing glycolysis. A counterregulatory hormone of insulin, raises plasma glucose levels in response to insulin-induced hypoglycemia. Plays an important role in initiating and maintaining hyperglycemic conditions in diabetes. Its function is as follows. Potent stimulator of glucose-dependent insulin release. Also stimulates insulin release in response to IL6. Plays important roles on gastric motility and the suppression of plasma glucagon levels. May be involved in the suppression of satiety and stimulation of glucose disposal in peripheral tissues, independent of the actions of insulin. Has growth-promoting activities on intestinal epithelium. May also regulate the hypothalamic pituitary axis (HPA) via effects on LH, TSH, CRH, oxytocin, and vasopressin secretion. Increases islet mass through stimulation of islet neogenesis and pancreatic beta cell proliferation. Inhibits beta cell apoptosis. In terms of biological role, stimulates intestinal growth and up-regulates villus height in the small intestine, concomitant with increased crypt cell proliferation and decreased enterocyte apoptosis. The gastrointestinal tract, from the stomach to the colon is the principal target for GLP-2 action. Plays a key role in nutrient homeostasis, enhancing nutrient assimilation through enhanced gastrointestinal function, as well as increasing nutrient disposal. Stimulates intestinal glucose transport and decreases mucosal permeability. Functionally, significantly reduces food intake. Inhibits gastric emptying in humans. Suppression of gastric emptying may lead to increased gastric distension, which may contribute to satiety by causing a sensation of fullness. May modulate gastric acid secretion and the gastro-pyloro-duodenal activity. May play an important role in intestinal mucosal growth in the early period of life. This Octodon degus (Degu) protein is Pro-glucagon (GCG).